We begin with the raw amino-acid sequence, 429 residues long: Sex determination protein fox-1 (429 aa).

Residues 156–180 are compositionally biased toward low complexity; that stretch reads ATTAGSTNGSAAVTQPDPSTSSGPD. The disordered stretch occupies residues 156–188; the sequence is ATTAGSTNGSAAVTQPDPSTSSGPDGPKRLHVS. The 77-residue stretch at 183 to 259 folds into the RRM domain; sequence KRLHVSNIPF…RKIEVNCATA (77 aa).

In terms of assembly, interacts with sup-12. As to expression, in males and hermaphrodites expressed in a subset of cells in the head and tail. Expressed in the pharynx, intestine and in muscles from the vulva and body wall.

It localises to the nucleus. Its function is as follows. RNA-binding protein that regulates tissue-specific alternative splicing events by binding to 5'-UGCAUG-3' and 5'-GCACG-3' elements. Also binds to poly(A), poly(G), poly(C), or poly(U) stretches of RNA. Plays a role in the sex determination pathway and X chromosome dosage compensation, and together with sex-1 is involved in making the distinction between one and two X-chromosomes. Binds to 5'-GCAUG-3' and 5'-GCACG-3' elements in intron 6 of the pre-mRNA of the sex-determining factor xol-1 to promote its alternative splicing and together with sex-1 negatively regulates the expression of xol-1 to promote hermaphrodite development. Negatively regulates the expression of the active isoform of xol-1 (isoform b) by promoting intron 6 retention and the deletion of exon 7 coding sequences in hermaphrodite embryos. Furthermore, binding to the pre-mRNA of xol-1 can also direct the use of an alternative 3' splice site enabling the xol-1 transcript to be trans-spliced to unrelated genes on chromosome 2, which also leads to xol-1 exon 7 deletion. Does not seem to regulate the retention of introns 1 to 5 of xol-1 pre-mRNA. Plays a role in the association of the dosage compensation complex proteins dpy-27 and sdc-3 with the hermaphrodite X chromosomes. Binds to 5'-UGCAUG-3' elements in intron 7 of the pre-mRNA of unc-32 to promote its alternative splicing in neuronal tissues. Binds to 5'-UGCAUG-3' elements in intron 4 of the pre-mRNA of egl-15 to promote its alternative splicing in body wall muscle tissues. Promotes binding of RNA-binding protein sup-12 to target RNA. Plays a role in male mating behavior. This is Sex determination protein fox-1 from Caenorhabditis elegans.